Consider the following 270-residue polypeptide: 4-hydroxy-tetrahydrodipicolinate reductase (270 aa).

NAD(+) is bound by residues 8 to 13 (GALGRM), D34, 102 to 104 (GTT), and 128 to 131 (SQNY). Catalysis depends on H160, which acts as the Proton donor/acceptor. H161 contributes to the (S)-2,3,4,5-tetrahydrodipicolinate binding site. Catalysis depends on K164, which acts as the Proton donor. A (S)-2,3,4,5-tetrahydrodipicolinate-binding site is contributed by 170-171 (GT).

It belongs to the DapB family.

Its subcellular location is the cytoplasm. The catalysed reaction is (S)-2,3,4,5-tetrahydrodipicolinate + NAD(+) + H2O = (2S,4S)-4-hydroxy-2,3,4,5-tetrahydrodipicolinate + NADH + H(+). The enzyme catalyses (S)-2,3,4,5-tetrahydrodipicolinate + NADP(+) + H2O = (2S,4S)-4-hydroxy-2,3,4,5-tetrahydrodipicolinate + NADPH + H(+). It functions in the pathway amino-acid biosynthesis; L-lysine biosynthesis via DAP pathway; (S)-tetrahydrodipicolinate from L-aspartate: step 4/4. Its function is as follows. Catalyzes the conversion of 4-hydroxy-tetrahydrodipicolinate (HTPA) to tetrahydrodipicolinate. The polypeptide is 4-hydroxy-tetrahydrodipicolinate reductase (Methanococcus maripaludis (strain C6 / ATCC BAA-1332)).